A 628-amino-acid polypeptide reads, in one-letter code: tRNA uridine 5-carboxymethylaminomethyl modification enzyme MnmG (628 aa).

FAD-binding positions include 14–19 (GAGHAG), valine 126, and serine 181. 273–287 (GPRYCPSIEDKVVRF) provides a ligand contact to NAD(+). Glutamine 370 is an FAD binding site.

Belongs to the MnmG family. Homodimer. Heterotetramer of two MnmE and two MnmG subunits. FAD is required as a cofactor.

The protein localises to the cytoplasm. Functionally, NAD-binding protein involved in the addition of a carboxymethylaminomethyl (cmnm) group at the wobble position (U34) of certain tRNAs, forming tRNA-cmnm(5)s(2)U34. The protein is tRNA uridine 5-carboxymethylaminomethyl modification enzyme MnmG of Pelobacter propionicus (strain DSM 2379 / NBRC 103807 / OttBd1).